The chain runs to 272 residues: METYAVFGNPIAHSKSPFIHQQFAQQLNIEHPYGRVLAPINDFINTLNAFFSAGGKGANVTVPFKEEAFARADELTERAALAGAVNTLMRLEDGRLLGDNTDGVGLLSDLERLSFIRPGLRILLIGAGGASRGVLLPLLSLDCAVTITNRTVSRAEELAKLFAHTGSIQALSMDELEGHEFDLIINATSSGISGDIPAIPSSLIHPGIYCYDMFYQKGKTPFLAWCEQRGSKRNADGLGMLVAQAAHAFLLWHGVLPDVEPVIKQLQEELSA.

Shikimate is bound by residues 14–16 (SKS) and Thr61. Lys65 functions as the Proton acceptor in the catalytic mechanism. An NADP(+)-binding site is contributed by Glu77. Positions 86 and 102 each coordinate shikimate. Residues 126–130 (GAGGA), 149–154 (NRTVSR), and Met213 each bind NADP(+). Residue Tyr215 coordinates shikimate. Gly237 is a binding site for NADP(+).

Belongs to the shikimate dehydrogenase family. In terms of assembly, homodimer.

The enzyme catalyses shikimate + NADP(+) = 3-dehydroshikimate + NADPH + H(+). The protein operates within metabolic intermediate biosynthesis; chorismate biosynthesis; chorismate from D-erythrose 4-phosphate and phosphoenolpyruvate: step 4/7. In terms of biological role, involved in the biosynthesis of the chorismate, which leads to the biosynthesis of aromatic amino acids. Catalyzes the reversible NADPH linked reduction of 3-dehydroshikimate (DHSA) to yield shikimate (SA). This is Shikimate dehydrogenase (NADP(+)) from Escherichia coli (strain K12 / MC4100 / BW2952).